The primary structure comprises 110 residues: MTDTLSRLAEVLESRKDAAADSSYVASLYHKGLNKILEKLGEESIETIIAAKDAAVSGNCSDVIYETADLWFHSMVMLAALGQHPQAVLDELDRRFGLSGHAEKAARTAE.

Belongs to the PRA-PH family.

It localises to the cytoplasm. It catalyses the reaction 1-(5-phospho-beta-D-ribosyl)-ATP + H2O = 1-(5-phospho-beta-D-ribosyl)-5'-AMP + diphosphate + H(+). The protein operates within amino-acid biosynthesis; L-histidine biosynthesis; L-histidine from 5-phospho-alpha-D-ribose 1-diphosphate: step 2/9. The sequence is that of Phosphoribosyl-ATP pyrophosphatase from Pseudomonas syringae pv. syringae (strain B728a).